Reading from the N-terminus, the 680-residue chain is Probable ATP-dependent RNA helicase pitchoune (680 aa).

The segment at 1 to 168 is disordered; it reads MSIREKLLMK…GKPAKDDEPF (168 aa). Polar residues predominate over residues 29–42; it reads KNAQKQEPPKQNGN. Over residues 59–69 the composition is skewed to acidic residues; that stretch reads DEDDDLEEDFQ. Positions 74–83 are enriched in basic residues; the sequence is PKKKQQKQPP. The span at 95-141 shows a compositional bias: acidic residues; it reads SESDDDEQEDEADEDSDLDEVAEVDEEDVDSGSEDDDQQEDEDEEEP. A Q motif motif is present at residues 187–215; it reads FASLKGAVSEATLRAIKEMGFTEMTEIQS. The region spanning 218 to 393 is the Helicase ATP-binding domain; it reads LTPLLKGRDL…KLALKSEPIY (176 aa). ATP is bound at residue 231–238; that stretch reads AQTGSGKT. Residues 341-344 carry the DEVD box motif; the sequence is DEVD. In terms of domain architecture, Helicase C-terminal spans 407–577; that stretch reads GLEQGYIVCP…DIQLQLEKLI (171 aa). The segment at 659–680 is disordered; it reads GSASKQRHFKQVNRDQAKKFMR. Basic and acidic residues predominate over residues 670-680; that stretch reads VNRDQAKKFMR.

Belongs to the DEAD box helicase family. DDX18/HAS1 subfamily.

It is found in the nucleus. It localises to the nucleolus. The catalysed reaction is ATP + H2O = ADP + phosphate + H(+). In terms of biological role, probable RNA-dependent helicase. Functions in cell growth and proliferation. May have a role in ribosome biogenesis and, consequently, in protein biosynthesis. The protein is Probable ATP-dependent RNA helicase pitchoune (pit) of Drosophila melanogaster (Fruit fly).